Consider the following 196-residue polypeptide: Segregation and condensation protein B (196 aa).

This sequence belongs to the ScpB family. Homodimer. Homodimerization may be required to stabilize the binding of ScpA to the Smc head domains. Component of a cohesin-like complex composed of ScpA, ScpB and the Smc homodimer, in which ScpA and ScpB bind to the head domain of Smc. The presence of the three proteins is required for the association of the complex with DNA.

The protein localises to the cytoplasm. Participates in chromosomal partition during cell division. May act via the formation of a condensin-like complex containing Smc and ScpA that pull DNA away from mid-cell into both cell halves. The sequence is that of Segregation and condensation protein B from Pediococcus pentosaceus (strain ATCC 25745 / CCUG 21536 / LMG 10740 / 183-1w).